The primary structure comprises 210 residues: Uridine kinase (210 aa).

12-19 (GGSGSGKT) provides a ligand contact to ATP.

It belongs to the uridine kinase family.

It localises to the cytoplasm. It catalyses the reaction uridine + ATP = UMP + ADP + H(+). The catalysed reaction is cytidine + ATP = CMP + ADP + H(+). The protein operates within pyrimidine metabolism; CTP biosynthesis via salvage pathway; CTP from cytidine: step 1/3. Its pathway is pyrimidine metabolism; UMP biosynthesis via salvage pathway; UMP from uridine: step 1/1. This Leuconostoc citreum (strain KM20) protein is Uridine kinase.